Consider the following 201-residue polypeptide: Imidazole glycerol phosphate synthase subunit HisH (201 aa).

A Glutamine amidotransferase type-1 domain is found at 1 to 201 (MIIVIDYDAG…ILKKFVDLCD (201 aa)). The Nucleophile role is filled by Cys79. Catalysis depends on residues His181 and Glu183.

Heterodimer of HisH and HisF.

It localises to the cytoplasm. It carries out the reaction 5-[(5-phospho-1-deoxy-D-ribulos-1-ylimino)methylamino]-1-(5-phospho-beta-D-ribosyl)imidazole-4-carboxamide + L-glutamine = D-erythro-1-(imidazol-4-yl)glycerol 3-phosphate + 5-amino-1-(5-phospho-beta-D-ribosyl)imidazole-4-carboxamide + L-glutamate + H(+). The enzyme catalyses L-glutamine + H2O = L-glutamate + NH4(+). Its pathway is amino-acid biosynthesis; L-histidine biosynthesis; L-histidine from 5-phospho-alpha-D-ribose 1-diphosphate: step 5/9. Functionally, IGPS catalyzes the conversion of PRFAR and glutamine to IGP, AICAR and glutamate. The HisH subunit catalyzes the hydrolysis of glutamine to glutamate and ammonia as part of the synthesis of IGP and AICAR. The resulting ammonia molecule is channeled to the active site of HisF. The protein is Imidazole glycerol phosphate synthase subunit HisH of Streptococcus mutans serotype c (strain ATCC 700610 / UA159).